A 755-amino-acid polypeptide reads, in one-letter code: Xaa-Pro dipeptidyl-peptidase (755 aa).

Residues Ser-348, Asp-468, and His-498 each act as charge relay system in the active site.

The protein belongs to the peptidase S15 family. In terms of assembly, homodimer.

It localises to the cytoplasm. It carries out the reaction Hydrolyzes Xaa-Pro-|- bonds to release unblocked, N-terminal dipeptides from substrates including Ala-Pro-|-p-nitroanilide and (sequentially) Tyr-Pro-|-Phe-Pro-|-Gly-Pro-|-Ile.. Functionally, removes N-terminal dipeptides sequentially from polypeptides having unsubstituted N-termini provided that the penultimate residue is proline. This chain is Xaa-Pro dipeptidyl-peptidase, found in Streptococcus thermophilus.